The following is a 317-amino-acid chain: Protoheme IX farnesyltransferase (317 aa).

7 helical membrane passes run 33 to 53 (VMSLVVFTAFAGLVLAPGEIN), 54 to 74 (PILGLIAILCIAVGAGASGAL), 117 to 137 (VILGLAVNWFSAGLLAFTIFF), 154 to 174 (IVIGGAAGAFPPMLGWACVTG), 181 to 201 (VILFLIIFLWTPAHFWALALF), 242 to 262 (FFTGLASAGYGIFAAVLSAIF), and 285 to 305 (MFAYSVLYLFAIFSGLLADHF).

The protein belongs to the UbiA prenyltransferase family. Protoheme IX farnesyltransferase subfamily.

It is found in the cell inner membrane. The catalysed reaction is heme b + (2E,6E)-farnesyl diphosphate + H2O = Fe(II)-heme o + diphosphate. It functions in the pathway porphyrin-containing compound metabolism; heme O biosynthesis; heme O from protoheme: step 1/1. In terms of biological role, converts heme B (protoheme IX) to heme O by substitution of the vinyl group on carbon 2 of heme B porphyrin ring with a hydroxyethyl farnesyl side group. This chain is Protoheme IX farnesyltransferase, found in Agrobacterium fabrum (strain C58 / ATCC 33970) (Agrobacterium tumefaciens (strain C58)).